The following is a 506-amino-acid chain: Anaerobic nitric oxide reductase transcription regulator NorR (506 aa).

At Asp57 the chain carries 4-aspartylphosphate. One can recognise a Sigma-54 factor interaction domain in the interval 187-416; sequence MIGLSPAMTQ…LEHAIHRAVV (230 aa). ATP contacts are provided by residues 215–222 and 278–287; these read GETGTGKE and ADNGTLFLDE. Residues 481–500 constitute a DNA-binding region (H-T-H motif); that stretch reads WAASARALETDVANLHRLAK.

It functions in the pathway nitrogen metabolism; nitric oxide reduction. Functionally, required for the expression of anaerobic nitric oxide (NO) reductase, acts as a transcriptional activator for at least the norVW operon. Activation also requires sigma-54. The sequence is that of Anaerobic nitric oxide reductase transcription regulator NorR from Salmonella arizonae (strain ATCC BAA-731 / CDC346-86 / RSK2980).